We begin with the raw amino-acid sequence, 324 residues long: Arginase (324 aa).

4 residues coordinate Mn(2+): H115, D143, H145, and D147. Substrate is bound by residues 145–149, 156–158, and D202; these read HADIN and SGN. Residues D249 and D251 each contribute to the Mn(2+) site. Substrate is bound by residues T263 and E294.

This sequence belongs to the arginase family. Homotrimer. Requires Mn(2+) as cofactor.

The catalysed reaction is L-arginine + H2O = urea + L-ornithine. The protein operates within nitrogen metabolism; urea cycle; L-ornithine and urea from L-arginine: step 1/1. This Emericella nidulans (strain FGSC A4 / ATCC 38163 / CBS 112.46 / NRRL 194 / M139) (Aspergillus nidulans) protein is Arginase (agaA).